A 336-amino-acid polypeptide reads, in one-letter code: UPF0324 membrane protein BR0028/BS1330_I0028 (336 aa).

The next 11 membrane-spanning stretches (helical) occupy residues 9 to 26 (ILPGLGLSVAITAAAMVL), 36 to 55 (RAWLEALVIAILLGTAVRSL), 68 to 90 (FSAKLLLEIAVALLGASISASAV), 94 to 116 (GSGLIFGIAAVVAVAITLSYGIG), 128 to 150 (LVACGNSICGNSAIAAMAPVIGA), 160 to 182 (AFTAILGVIVVLTLPLLVPLLGL), 189 to 211 (ILAGLTVYAVPQVLAATAPVSLL), 221 to 240 (LVRVLMLGPVILVFALISGN), 247 to 269 (PGFFQLVPWFIIGFLAMMALHSL), 279 to 301 (AIQYASMLLTIISMAALGLGVDI), and 313 to 335 (LTAILSLIALCCISLGLIHMLGV).

Belongs to the UPF0324 family.

The protein localises to the cell membrane. This Brucella suis biovar 1 (strain 1330) protein is UPF0324 membrane protein BR0028/BS1330_I0028.